A 782-amino-acid polypeptide reads, in one-letter code: Glucocorticoid receptor (782 aa).

The tract at residues 1–20 (MDPKESLTPPSREEIPSSVL) is disordered. The segment at 1-425 (MDPKESLTPP…SAATGPPPKL (425 aa)) is modulating. Thr8 bears the Phosphothreonine mark. The residue at position 24 (Arg24) is an Omega-N-methylarginine. Ser46 is subject to Phosphoserine. The segment at 48 to 79 (SLAAVSQPDSKQQRLAVDFPKGSGSNAQQPDL) is disordered. Phosphoserine occurs at positions 114, 135, 142, 208, 216, and 231. Residues 130 to 184 (LSRSTSVPENPKSSASAAGPAAPAEKAFPKTHSDGAPEQPNVKGQTGTNGGNVKL) are disordered. The span at 140 to 155 (PKSSASAAGPAAPAEK) shows a compositional bias: low complexity. Residue Lys263 forms a Glycyl lysine isopeptide (Lys-Gly) (interchain with G-Cter in SUMO2) linkage. Ser272 bears the Phosphoserine mark. Residues Lys282 and Lys298 each participate in a glycyl lysine isopeptide (Lys-Gly) (interchain with G-Cter in SUMO); alternate cross-link. Residues Lys282 and Lys298 each participate in a glycyl lysine isopeptide (Lys-Gly) (interchain with G-Cter in SUMO2); alternate cross-link. Ser312 and Ser410 each carry phosphoserine. Lys424 is covalently cross-linked (Glycyl lysine isopeptide (Lys-Gly) (interchain with G-Cter in ubiquitin)). 2 NR C4-type zinc fingers span residues 426–446 (CLVCSDEASGCHYGVLTCGSC) and 462–486 (CAGRNDCIIDKIRRKNCPACRYRKC). A DNA-binding region (nuclear receptor) is located at residues 426–491 (CLVCSDEASG…RYRKCLQAGM (66 aa)). N6-acetyllysine is present on residues Lys485, Lys497, Lys499, and Lys500. The interval 490 to 782 (GMNLEARKTK…NIKKLLFHQK (293 aa)) is interaction with CLOCK. Positions 492-528 (NLEARKTKKKIKGIQQATTGVSQETSENSANKTIVPA) are hinge. The NR LBD domain maps to 529-763 (TLPQLTPTLV…FPEMLAEIIT (235 aa)). Residues 537–702 (LVSLLEVIEP…EIRMTYIKEL (166 aa)) form an interaction with CRY1 region. Residue Lys708 forms a Glycyl lysine isopeptide (Lys-Gly) (interchain with G-Cter in SUMO) linkage.

It belongs to the nuclear hormone receptor family. NR3 subfamily. As to quaternary structure, heteromultimeric cytoplasmic complex with HSP90AA1, HSPA1A/HSPA1B, and FKBP5 or another immunophilin such as PPID, STIP1, or the immunophilin homolog PPP5C. Upon ligand binding FKBP5 dissociates from the complex and FKBP4 takes its place, thereby linking the complex to dynein and mediating transport to the nucleus, where the complex dissociates. Probably forms a complex composed of chaperones HSP90 and HSP70, co-chaperones CDC37, PPP5C, TSC1 and client protein TSC2, CDK4, AKT, RAF1 and NR3C1; this complex does not contain co-chaperones STIP1/HOP and PTGES3/p23. Directly interacts with UNC45A. Binds to DNA as a homodimer, and as heterodimer with NR3C2 or the retinoid X receptor. Binds STAT5A and STAT5B homodimers and heterodimers. Interacts with NRIP1, POU2F1, POU2F2 and TRIM28. Interacts with several coactivator complexes, including the SMARCA4 complex, CREBBP/EP300, TADA2L (Ada complex) and p160 coactivators such as NCOA2 and NCOA6. Interaction with BAG1 inhibits transactivation. Interacts with HEXIM1 and TGFB1I1. Interacts with NCOA1. Interacts with NCOA3, SMARCA4, SMARCC1, SMARCD1, and SMARCE1. Interacts with CLOCK, CRY1 and CRY2 in a ligand-dependent fashion. Interacts with CIART. Interacts with RWDD3. Interacts with UBE2I/UBC9 and this interaction is enhanced in the presence of RWDD3. Interacts with GRIP1. Interacts with NR4A3 (via nuclear receptor DNA-binding domain), represses transcription activity of NR4A3 on the POMC promoter Nur response element (NurRE). Directly interacts with PNRC2 to attract and form a complex with UPF1 and DCP1A; the interaction leads to rapid mRNA degradation. Interacts with GSK3B. Interacts with FNIP1 and FNIP2. Interacts (via C-terminus) with HNRNPU (via C-terminus). Interacts with MCM3AP. Interacts (via domain NR LBD) with HSP90AA1 and HSP90AB1. In the absence of hormonal ligand, interacts with TACC1. Interacts (via NR LBD domain) with ZNF764 (via KRAB domain); the interaction regulates transcription factor activity of NR3C1 by directing its actions toward certain biologic pathways. In terms of processing, acetylation by CLOCK reduces its binding to glucocorticoid response elements and its transcriptional activity. Increased proteasome-mediated degradation in response to glucocorticoids. Post-translationally, phosphorylated in the absence of hormone; becomes hyperphosphorylated in the presence of glucocorticoid. The Ser-208, Ser-231 and Ser-410-phosphorylated forms are mainly cytoplasmic, and the Ser-216-phosphorylated form is nuclear. Phosphorylation at Ser-216 increases transcriptional activity. Phosphorylation at Ser-208, Ser-231 and Ser-410 decreases signaling capacity. Phosphorylation at Ser-410 may protect from glucocorticoid-induced apoptosis. Phosphorylation at Ser-208 and Ser-216 is not required in regulation of chromosome segregation. May be dephosphorylated by PPP5C, attenuates NR3C1 action. In terms of processing, ubiquitinated by UBR5, leading to its degradation: UBR5 specifically recognizes and binds ligand-bound NR3C1 when it is not associated with coactivators (NCOAs). In presence of NCOAs, the UBR5-degron is not accessible, preventing its ubiquitination and degradation. Sumoylation at Lys-282 and Lys-298 negatively regulates its transcriptional activity. Sumoylation at Lys-708 positively regulates its transcriptional activity in the presence of RWDD3. Sumoylation at Lys-282 and Lys-298 is dispensable whereas sumoylation at Lys-708 is critical for the stimulatory effect of RWDD3 on its transcriptional activity. Heat shock increases sumoylation in a RWDD3-dependent manner.

The protein localises to the cytoplasm. It is found in the nucleus. The protein resides in the mitochondrion. It localises to the cytoskeleton. Its subcellular location is the spindle. The protein localises to the microtubule organizing center. It is found in the centrosome. The protein resides in the chromosome. It localises to the nucleoplasm. Receptor for glucocorticoids (GC). Has a dual mode of action: as a transcription factor that binds to glucocorticoid response elements (GRE), both for nuclear and mitochondrial DNA, and as a modulator of other transcription factors. Affects inflammatory responses, cellular proliferation and differentiation in target tissues. Involved in chromatin remodeling. Plays a role in rapid mRNA degradation by binding to the 5' UTR of target mRNAs and interacting with PNRC2 in a ligand-dependent manner which recruits the RNA helicase UPF1 and the mRNA-decapping enzyme DCP1A, leading to RNA decay. Could act as a coactivator for STAT5-dependent transcription upon growth hormone (GH) stimulation and could reveal an essential role of hepatic GR in the control of body growth. Mediates glucocorticoid-induced apoptosis. Promotes accurate chromosome segregation during mitosis. May act as a tumor suppressor. May play a negative role in adipogenesis through the regulation of lipolytic and antilipogenic gene expression. This chain is Glucocorticoid receptor (NR3C1), found in Sus scrofa (Pig).